The chain runs to 192 residues: Orotate phosphoribosyltransferase (192 aa).

5-phospho-alpha-D-ribose 1-diphosphate contacts are provided by residues arginine 84, lysine 88, and 110–118 (DDVLTTGNS). Orotate contacts are provided by threonine 114 and arginine 142.

Belongs to the purine/pyrimidine phosphoribosyltransferase family. PyrE subfamily. In terms of assembly, homodimer. Mg(2+) serves as cofactor.

The catalysed reaction is orotidine 5'-phosphate + diphosphate = orotate + 5-phospho-alpha-D-ribose 1-diphosphate. The protein operates within pyrimidine metabolism; UMP biosynthesis via de novo pathway; UMP from orotate: step 1/2. Catalyzes the transfer of a ribosyl phosphate group from 5-phosphoribose 1-diphosphate to orotate, leading to the formation of orotidine monophosphate (OMP). This is Orotate phosphoribosyltransferase from Pyrobaculum calidifontis (strain DSM 21063 / JCM 11548 / VA1).